We begin with the raw amino-acid sequence, 421 residues long: 4'-demethylrebeccamycin synthase (421 aa).

This sequence belongs to the glycosyltransferase 28 family.

It carries out the reaction 4'-demethylrebeccamycin + H2O = dichloroarcyriaflavin A + beta-D-glucose. The protein operates within alkaloid biosynthesis. Its function is as follows. Catalyzes the penultimate step in the biosynthesis of rebeccamycin, an indolocarbazole alkaloid that inhibits topoisomerase 1. Has a wide substrate range, including staurosporine aglycone, EJG-III-108A, J-104303, 6-N-methyl-arcyriaflavin and indolo-[2,3-a]-carbazole. The sequence is that of 4'-demethylrebeccamycin synthase (rebG) from Lentzea aerocolonigenes (Lechevalieria aerocolonigenes).